The primary structure comprises 574 residues: Serine/threonine-protein kinase fray1 (574 aa).

The span at 24 to 41 (NHHDLPDSDSDSSSREEE) shows a compositional bias: basic and acidic residues. Residues 24 to 64 (NHHDLPDSDSDSSSREEELMNSSGGGNGKEPIGEKKKLPSH) are disordered. A Protein kinase domain is found at 97–357 (YNLIEPIGEG…ASKLLEHKVF (261 aa)). Residues 103–111 (IGEGTEGRV) and Lys126 each bind ATP. Asp221 serves as the catalytic Proton acceptor. Thr256 carries the phosphothreonine; by autocatalysis modification. Disordered stretches follow at residues 381–447 (YRES…LVNM), 462–514 (LSSG…PEKE), and 532–554 (FGSP…HEHH). Composition is skewed to low complexity over residues 386–403 (SPAS…PSSP), 418–441 (KNIK…NLSN), and 462–475 (LSSG…SSDL). A compositionally biased stretch (basic residues) spans 478 to 491 (GHLHKIGTPKKKHS). A compositionally biased stretch (low complexity) spans 492 to 506 (PSGSIGDSHGSISPP). The span at 536-553 (KEGDHNHQHHKSEGDHEH) shows a compositional bias: basic and acidic residues.

The protein belongs to the protein kinase superfamily. STE Ser/Thr protein kinase family. STE20 subfamily. The cofactor is Mn(2+). Post-translationally, undergoes autophosphorylation in the catalytic domain.

The enzyme catalyses L-seryl-[protein] + ATP = O-phospho-L-seryl-[protein] + ADP + H(+). The catalysed reaction is L-threonyl-[protein] + ATP = O-phospho-L-threonyl-[protein] + ADP + H(+). In Dictyostelium discoideum (Social amoeba), this protein is Serine/threonine-protein kinase fray1.